Consider the following 152-residue polypeptide: 3-hydroxyacyl-[acyl-carrier-protein] dehydratase FabZ (152 aa).

Residue His57 is part of the active site.

It belongs to the thioester dehydratase family. FabZ subfamily.

It is found in the cytoplasm. It catalyses the reaction a (3R)-hydroxyacyl-[ACP] = a (2E)-enoyl-[ACP] + H2O. Functionally, involved in unsaturated fatty acids biosynthesis. Catalyzes the dehydration of short chain beta-hydroxyacyl-ACPs and long chain saturated and unsaturated beta-hydroxyacyl-ACPs. The sequence is that of 3-hydroxyacyl-[acyl-carrier-protein] dehydratase FabZ from Xanthomonas axonopodis pv. citri (strain 306).